Consider the following 197-residue polypeptide: FMN-dependent NADH:quinone oxidoreductase (197 aa).

S10 is an FMN binding site.

This sequence belongs to the azoreductase type 1 family. Homodimer. Requires FMN as cofactor.

The enzyme catalyses 2 a quinone + NADH + H(+) = 2 a 1,4-benzosemiquinone + NAD(+). It carries out the reaction N,N-dimethyl-1,4-phenylenediamine + anthranilate + 2 NAD(+) = 2-(4-dimethylaminophenyl)diazenylbenzoate + 2 NADH + 2 H(+). Its function is as follows. Quinone reductase that provides resistance to thiol-specific stress caused by electrophilic quinones. Functionally, also exhibits azoreductase activity. Catalyzes the reductive cleavage of the azo bond in aromatic azo compounds to the corresponding amines. This is FMN-dependent NADH:quinone oxidoreductase from Mycoplasma genitalium (strain ATCC 33530 / DSM 19775 / NCTC 10195 / G37) (Mycoplasmoides genitalium).